A 711-amino-acid chain; its full sequence is MKGFWNSKSTIRITLSFIFLFISQFSDVLAAPTRHLCRPEQKDALLKFKTEFEIGKPCRYCTVYCIEPHPKTESWGNNNSDCCNWEGVTCNAKSGEVIELDLSCSYLHGRFHSNSSIRNLHFLTTLDLSFNDFKGQIMSSIENLSHLTYLDLSFNHFSGQVPSSIGNLSHLTFLDLYCNQFSGQVPSSIGNLSHLTTLELSFNRFFGQFPSSIGGLSHLTTLNLFVNNFLGQIPSSIGNLSNLTSLYLCKNNFSGQIPSFIGNLSQLTRLDLSSNNFFGEIPGWLWTLPNLFYVNLSYNTFIGFQRPNKPEPSMGHLLGSNNNFTGKIPSFICELRSLETLDLSDNNFSGLIPRCMGNLKSNLSHLNLRQNNLSGGLPKHIFEILRSLDVGHNQLVGKLPRSLRFFSTLEVLNVESNRINDTFPFWLTSLPKLQVLVLRSNAFHGPIHEASFLKLRIIDISHNHFNGTLPSDYFVKWSAMSSLGTDEDRSNANYMGSVYYQDSMVLMNKGVESELIRILTIYTALDFSGNKFEGEIPKSIGLLKELLVLNLSNNAFTGHIPSSMGKLTALESLDVSQNKLYGEIPQEIGNLSFLSCMNFSHNQLAGLVPGGQQFLTQPCSSFEDNLGLFGSTLEEDCRDIHTPASHQQYKTPETEEEDEEVISWIAAAIGFIPGIVLGLTIGYILVFYKPEWFIKTFGRNNCRRRSTTTTH.

The signal sequence occupies residues 1–30; that stretch reads MKGFWNSKSTIRITLSFIFLFISQFSDVLA. At 31–666 the chain is on the extracellular side; it reads APTRHLCRPE…EDEEVISWIA (636 aa). Residues Asn-78, Asn-114, Asn-143, Asn-167, and Asn-191 are each glycosylated (N-linked (GlcNAc...) asparagine). 8 LRR repeats span residues 120–143, 144–168, 170–192, 193–216, 218–240, 241–266, 268–288, and 289–316; these read LHFLTTLDLSFNDFKGQIMSSIEN, LSHLTYLDLSFNHFSGQVPSSIGNL, HLTFLDLYCNQFSGQVPSSIGNL, SHLTTLELSFNRFFGQFPSSIGGL, HLTTLNLFVNNFLGQIPSSIGNL, SNLTSLYLCKNNFSGQIPSFIGNLSQ, TRLDLSSNNFFGEIPGWLWTL, and PNLFYVNLSYNTFIGFQRPNKPEPSMGH. N-linked (GlcNAc...) asparagine glycosylation is found at Asn-239, Asn-242, Asn-252, and Asn-263. Asn-295, Asn-323, Asn-347, Asn-362, and Asn-372 each carry an N-linked (GlcNAc...) asparagine glycan. One copy of the LRR 9; degenerate repeat lies at 317–334; it reads LLGSNNNFTGKIPSFICE. LRR repeat units follow at residues 335 to 358, 360 to 384, 386 to 406, 407 to 430, 431 to 452, 453 to 476, 519 to 543, 544 to 567, 568 to 591, and 593 to 616; these read LRSLETLDLSDNNFSGLIPRCMGN, KSNLSHLNLRQNNLSGGLPKHIFEI, RSLDVGHNQLVGKLPRSLRFF, STLEVLNVESNRINDTFPFWLTSL, PKLQVLVLRSNAFHGPIHEASF, LKLRIIDISHNHFNGTLPSDYFVK, LTIYTALDFSGNKFEGEIPKSIGLL, KELLVLNLSNNAFTGHIPSSMGKL, TALESLDVSQNKLYGEIPQEIGNL, and FLSCMNFSHNQLAGLVPGGQQFLT. A glycan (N-linked (GlcNAc...) asparagine) is linked at Asn-420. The N-linked (GlcNAc...) asparagine glycan is linked to Asn-466. Residues Asn-550, Asn-590, and Asn-598 are each glycosylated (N-linked (GlcNAc...) asparagine). The chain crosses the membrane as a helical span at residues 667–687; it reads AAIGFIPGIVLGLTIGYILVF. The Cytoplasmic portion of the chain corresponds to 688-711; sequence YKPEWFIKTFGRNNCRRRSTTTTH.

It belongs to the RLP family.

It is found in the cell membrane. This chain is Receptor-like protein 43, found in Arabidopsis thaliana (Mouse-ear cress).